Consider the following 112-residue polypeptide: MNATILVKIITPLSIALEKQAKMVTMSGEEGMFGVLPSHVPMIVSLKAGLVQVYIDDMHKSENTYLISSGVTEVTANYINIATETAINVTNFSEAEIATKLLDLQKTLSDQH.

This sequence belongs to the ATPase epsilon chain family. In terms of assembly, F-type ATPases have 2 components, CF(1) - the catalytic core - and CF(0) - the membrane proton channel. CF(1) has five subunits: alpha(3), beta(3), gamma(1), delta(1), epsilon(1). CF(0) has three main subunits: a, b and c.

It localises to the cell membrane. In terms of biological role, produces ATP from ADP in the presence of a proton gradient across the membrane. The sequence is that of ATP synthase epsilon chain from Rickettsia africae (strain ESF-5).